Consider the following 146-residue polypeptide: Hemoglobin subunit beta-A/B (146 aa).

Gly1 is modified (N-acetylserine; in variant beta-B). One can recognise a Globin domain in the interval 2-146; the sequence is FLTAEEKGLV…VANALAHKYH (145 aa). A Phosphoserine modification is found at Ser44. Lys59 carries the N6-acetyllysine modification. Residue His63 participates in heme b binding. The residue at position 82 (Lys82) is an N6-acetyllysine. His92 contacts heme b. Cys93 carries the post-translational modification S-nitrosocysteine. Residue Lys144 is modified to N6-acetyllysine.

Belongs to the globin family. Heterotetramer of two alpha chains and two beta chains. Red blood cells.

Functionally, involved in oxygen transport from the lung to the various peripheral tissues. This is Hemoglobin subunit beta-A/B (HBB) from Felis catus (Cat).